Reading from the N-terminus, the 339-residue chain is Methylglutaconyl-CoA hydratase, mitochondrial (339 aa).

Residues 1 to 67 (MAAAVAAAPG…AGGPAPKRGY (67 aa)) constitute a mitochondrion transit peptide. The residue at position 100 (lysine 100) is an N6-acetyllysine; alternate. Lysine 100 carries the post-translational modification N6-succinyllysine; alternate. An RNA-binding region spans residues 105-119 (KNLIKMLSKAVDALK). Lysine 109 bears the N6-succinyllysine mark. N6-acetyllysine; alternate is present on residues lysine 113 and lysine 144. N6-succinyllysine; alternate occurs at positions 113 and 144. An N6-succinyllysine mark is found at lysine 148 and lysine 160. N6-acetyllysine; alternate is present on residues lysine 204 and lysine 211. 2 positions are modified to N6-succinyllysine; alternate: lysine 204 and lysine 211. N6-succinyllysine is present on lysine 329.

It belongs to the enoyl-CoA hydratase/isomerase family. Homohexamer.

It localises to the mitochondrion. It carries out the reaction (3S)-3-hydroxy-3-methylglutaryl-CoA = 3-methyl-(2E)-glutaconyl-CoA + H2O. The catalysed reaction is (3S)-citramalyl-CoA = itaconyl-CoA + H2O. The enzyme catalyses 3-hydroxyisovaleryl-CoA = 3-methylbut-2-enoyl-CoA + H2O. It catalyses the reaction (S)-3-hydroxyglutaryl-CoA = (2E)-glutaconyl-CoA + H2O. It participates in amino-acid degradation; L-leucine degradation; (S)-3-hydroxy-3-methylglutaryl-CoA from 3-isovaleryl-CoA: step 3/3. Its function is as follows. Catalyzes the fifth step in the leucine degradation pathway, the reversible hydration of 3-methylglutaconyl-CoA (3-MG-CoA) to 3-hydroxy-3-methylglutaryl-CoA (HMG-CoA). Can catalyze the reverse reaction but at a much lower rate in vitro. HMG-CoA is then quickly degraded by another enzyme (such as HMG-CoA lyase) to give acetyl-CoA and acetoacetate. Uses other substrates such as (2E)-glutaconyl-CoA efficiently in vitro, and to a lesser extent 3-methylcrotonyl-CoA (3-methyl-(2E)-butenoyl-CoA), crotonyl-CoA ((2E)-butenoyl-CoA) and 3-hydroxybutanoyl-CoA (the missing carboxylate reduces affinity to the active site). Originally it was identified as an RNA-binding protein as it binds to AU-rich elements (AREs) in vitro. AREs direct rapid RNA degradation and mRNA deadenylation. Might have itaconyl-CoA hydratase activity, converting itaconyl-CoA into citramalyl-CoA in the C5-dicarboxylate catabolism pathway. The C5-dicarboxylate catabolism pathway is required to detoxify itaconate, an antimicrobial metabolite and immunomodulator produced by macrophages during certain infections, that can act as a vitamin B12-poisoning metabolite. This Homo sapiens (Human) protein is Methylglutaconyl-CoA hydratase, mitochondrial (AUH).